A 184-amino-acid polypeptide reads, in one-letter code: Acireductone dioxygenase 4 (184 aa).

The Fe(2+) site is built by His86, His88, Glu92, and His131. Ni(2+)-binding residues include His86, His88, Glu92, and His131.

Belongs to the acireductone dioxygenase (ARD) family. It depends on Fe(2+) as a cofactor. Ni(2+) is required as a cofactor.

It is found in the cytoplasm. The protein resides in the nucleus. The catalysed reaction is 1,2-dihydroxy-5-(methylsulfanyl)pent-1-en-3-one + O2 = 4-methylsulfanyl-2-oxobutanoate + formate + 2 H(+). The enzyme catalyses 1,2-dihydroxy-5-(methylsulfanyl)pent-1-en-3-one + O2 = 3-(methylsulfanyl)propanoate + CO + formate + 2 H(+). Its pathway is amino-acid biosynthesis; L-methionine biosynthesis via salvage pathway; L-methionine from S-methyl-5-thio-alpha-D-ribose 1-phosphate: step 5/6. Catalyzes 2 different reactions between oxygen and the acireductone 1,2-dihydroxy-3-keto-5-methylthiopentene (DHK-MTPene) depending upon the metal bound in the active site. Fe-containing acireductone dioxygenase (Fe-ARD) produces formate and 2-keto-4-methylthiobutyrate (KMTB), the alpha-ketoacid precursor of methionine in the methionine recycle pathway. Ni-containing acireductone dioxygenase (Ni-ARD) produces methylthiopropionate, carbon monoxide and formate, and does not lie on the methionine recycle pathway. This Oryza sativa subsp. japonica (Rice) protein is Acireductone dioxygenase 4 (ARD4).